The sequence spans 387 residues: Mannitol-1-phosphate 5-dehydrogenase (387 aa).

3–14 (ALHFGAGNIGRG) serves as a coordination point for NAD(+).

The protein belongs to the mannitol dehydrogenase family.

It catalyses the reaction D-mannitol 1-phosphate + NAD(+) = beta-D-fructose 6-phosphate + NADH + H(+). The sequence is that of Mannitol-1-phosphate 5-dehydrogenase from Yersinia pseudotuberculosis serotype O:3 (strain YPIII).